The primary structure comprises 130 residues: Large ribosomal subunit protein bL19 (130 aa).

The protein belongs to the bacterial ribosomal protein bL19 family.

Functionally, this protein is located at the 30S-50S ribosomal subunit interface and may play a role in the structure and function of the aminoacyl-tRNA binding site. The chain is Large ribosomal subunit protein bL19 from Parvibaculum lavamentivorans (strain DS-1 / DSM 13023 / NCIMB 13966).